We begin with the raw amino-acid sequence, 236 residues long: Small ribosomal subunit protein eS6 (236 aa).

2 positions are modified to phosphoserine: serine 232 and serine 233.

This sequence belongs to the eukaryotic ribosomal protein eS6 family. Phosphorylated.

This is Small ribosomal subunit protein eS6 (RPS6) from Kluyveromyces lactis (strain ATCC 8585 / CBS 2359 / DSM 70799 / NBRC 1267 / NRRL Y-1140 / WM37) (Yeast).